Reading from the N-terminus, the 164-residue chain is Transcription elongation factor GreA (164 aa).

Residues 11–76 adopt a coiled-coil conformation; sequence EESYDRLKAE…LQELLNNAKV (66 aa).

It belongs to the GreA/GreB family.

In terms of biological role, necessary for efficient RNA polymerase transcription elongation past template-encoded arresting sites. The arresting sites in DNA have the property of trapping a certain fraction of elongating RNA polymerases that pass through, resulting in locked ternary complexes. Cleavage of the nascent transcript by cleavage factors such as GreA or GreB allows the resumption of elongation from the new 3'terminus. GreA releases sequences of 2 to 3 nucleotides. This chain is Transcription elongation factor GreA, found in Mycolicibacterium vanbaalenii (strain DSM 7251 / JCM 13017 / BCRC 16820 / KCTC 9966 / NRRL B-24157 / PYR-1) (Mycobacterium vanbaalenii).